The chain runs to 1665 residues: Mediator of RNA polymerase II transcription subunit 13 (1665 aa).

Disordered regions lie at residues 411-460 (KETE…IDKN), 482-512 (INLD…ETKP), 551-580 (TVSQ…GTET), and 673-781 (LDSS…NQIS). Residues 415–445 (PENESENDMEIDDLFGGDESDDNDDLEEAGN) are compositionally biased toward acidic residues. Positions 499–512 (VPDKENFKPKETKP) are enriched in basic and acidic residues. Residues 551–568 (TVSQSAVTTNPPSVGSAP) are compositionally biased toward low complexity. A compositionally biased stretch (acidic residues) spans 682-720 (EGGEDIEDDDNDYEDEGDDDEEEEGEEEEEEESDEDEIS). Positions 728–762 (LKLNTQNESVPPQQSNYNPVNITDSGSNTTNNITD) are enriched in polar residues.

It belongs to the Mediator complex subunit 13 family. Component of the SRB8-11 complex, which itself associates with the Mediator complex.

The protein localises to the nucleus. Functionally, component of the SRB8-11 complex. The SRB8-11 complex is a regulatory module of the Mediator complex which is itself involved in regulation of basal and activated RNA polymerase II-dependent transcription. The SRB8-11 complex may be involved in the transcriptional repression of a subset of genes regulated by Mediator. It may inhibit the association of the Mediator complex with RNA polymerase II to form the holoenzyme complex. This is Mediator of RNA polymerase II transcription subunit 13 (SSN2) from Candida albicans (strain SC5314 / ATCC MYA-2876) (Yeast).